The primary structure comprises 513 residues: NADH-quinone oxidoreductase chain 13 (513 aa).

Helical transmembrane passes span 3-23, 34-54, 81-101, 112-132, 133-153, 164-184, 211-231, 250-270, 277-297, 312-332, 340-360, 383-403, 418-438, and 463-483; these read NLLS…ALFL, AKWL…FVLF, VDGI…LTIL, EYMI…TALD, LVLF…IIGI, FKFF…MIAM, MTVV…SFAV, PTAG…YGFL, FPVA…IAIV, VIAY…FAAN, IFQM…VGVI, AAVF…SGFV, WVAL…LWLY, and WVFI…RLVT.

The protein belongs to the complex I subunit 4 family. NDH-1 is composed of at least 14 different subunits, Nqo1 to Nqo14. The complex has a L-shaped structure, with the hydrophobic arm (subunits Nqo7, Nqo8, Nqo10 to Nqo14) embedded in the inner membrane and the hydrophilic peripheral arm (subunits Nqo1 to Nqo6, Nqo9) protruding into the bacterial cytoplasm. The hydrophilic domain contains all the redox centers.

The protein resides in the cell inner membrane. The catalysed reaction is a quinone + NADH + 5 H(+)(in) = a quinol + NAD(+) + 4 H(+)(out). In terms of biological role, NDH-1 shuttles electrons from NADH, via FMN and iron-sulfur (Fe-S) centers, to quinones in the respiratory chain. The immediate electron acceptor for the enzyme in this species is believed to be ubiquinone. Couples the redox reaction to proton translocation (for every two electrons transferred, four hydrogen ions are translocated across the cytoplasmic membrane), and thus conserves the redox energy in a proton gradient. This is NADH-quinone oxidoreductase chain 13 from Paracoccus denitrificans.